A 401-amino-acid polypeptide reads, in one-letter code: Formate-dependent phosphoribosylglycinamide formyltransferase (401 aa).

Residues 22–23 (EL) and Glu-82 contribute to the N(1)-(5-phospho-beta-D-ribosyl)glycinamide site. ATP-binding positions include Arg-115, Lys-157, 162 to 167 (SSGKGQ), 197 to 200 (EGFI), and Glu-205. In terms of domain architecture, ATP-grasp spans 120-315 (RLAAESLGLP…EFELHARAIL (196 aa)). Mg(2+) contacts are provided by Glu-274 and Glu-286. N(1)-(5-phospho-beta-D-ribosyl)glycinamide contacts are provided by residues Asp-293, Lys-362, and 369 to 370 (RR).

The protein belongs to the PurK/PurT family. As to quaternary structure, homodimer.

The enzyme catalyses N(1)-(5-phospho-beta-D-ribosyl)glycinamide + formate + ATP = N(2)-formyl-N(1)-(5-phospho-beta-D-ribosyl)glycinamide + ADP + phosphate + H(+). It functions in the pathway purine metabolism; IMP biosynthesis via de novo pathway; N(2)-formyl-N(1)-(5-phospho-D-ribosyl)glycinamide from N(1)-(5-phospho-D-ribosyl)glycinamide (formate route): step 1/1. Involved in the de novo purine biosynthesis. Catalyzes the transfer of formate to 5-phospho-ribosyl-glycinamide (GAR), producing 5-phospho-ribosyl-N-formylglycinamide (FGAR). Formate is provided by PurU via hydrolysis of 10-formyl-tetrahydrofolate. The chain is Formate-dependent phosphoribosylglycinamide formyltransferase from Cupriavidus necator (strain ATCC 17699 / DSM 428 / KCTC 22496 / NCIMB 10442 / H16 / Stanier 337) (Ralstonia eutropha).